A 372-amino-acid chain; its full sequence is Putative glutamate--cysteine ligase 2 (372 aa).

It belongs to the glutamate--cysteine ligase type 2 family. YbdK subfamily. In terms of assembly, homodimer.

It carries out the reaction L-cysteine + L-glutamate + ATP = gamma-L-glutamyl-L-cysteine + ADP + phosphate + H(+). In terms of biological role, ATP-dependent carboxylate-amine ligase which exhibits weak glutamate--cysteine ligase activity. The chain is Putative glutamate--cysteine ligase 2 (ybdK) from Salmonella arizonae (strain ATCC BAA-731 / CDC346-86 / RSK2980).